The chain runs to 354 residues: MSELKNDRYLRALAKQPVDVTPVWMMRQAGRYLPEYRATRAQAGDFMSLCRNAELACEVTLQPLRRYPLDAAILFSDILTIPDAMGLGLYFETGEGPKFERPISSLSDVKKIPKLDPNDDLGYVMNAVSTIRRELKGEVPLIGFSGSPWTLATYMVEGGSSKVFGKIKKMAFAEPQTLHLLLDKLADSVIDYLNAQIKAGAQSLMVFDSWGGVLSPRDYNEFSLQYMHKIVDGLIREYDGRRVPVTLFTKNGGQWIEAIAATGCDAIGLDWTINISDAKRRVGDKVALQGNMDPSMLHGTPERIRQEVATILEDFGTGNGHVFNLGHGITPDVDPENAGVFINAVHEFSAKYHK.

Substrate contacts are provided by residues 27-31 (RQAGR), Asp77, Tyr154, Ser209, and His327.

This sequence belongs to the uroporphyrinogen decarboxylase family. As to quaternary structure, homodimer.

It localises to the cytoplasm. It carries out the reaction uroporphyrinogen III + 4 H(+) = coproporphyrinogen III + 4 CO2. The protein operates within porphyrin-containing compound metabolism; protoporphyrin-IX biosynthesis; coproporphyrinogen-III from 5-aminolevulinate: step 4/4. Catalyzes the decarboxylation of four acetate groups of uroporphyrinogen-III to yield coproporphyrinogen-III. This is Uroporphyrinogen decarboxylase from Pseudoalteromonas translucida (strain TAC 125).